A 349-amino-acid chain; its full sequence is Phosphoribosylformylglycinamidine cyclo-ligase (349 aa).

This sequence belongs to the AIR synthase family.

It localises to the cytoplasm. The enzyme catalyses 2-formamido-N(1)-(5-O-phospho-beta-D-ribosyl)acetamidine + ATP = 5-amino-1-(5-phospho-beta-D-ribosyl)imidazole + ADP + phosphate + H(+). The protein operates within purine metabolism; IMP biosynthesis via de novo pathway; 5-amino-1-(5-phospho-D-ribosyl)imidazole from N(2)-formyl-N(1)-(5-phospho-D-ribosyl)glycinamide: step 2/2. The polypeptide is Phosphoribosylformylglycinamidine cyclo-ligase (Lawsonia intracellularis (strain PHE/MN1-00)).